The sequence spans 475 residues: Argininosuccinate lyase (475 aa).

The protein belongs to the lyase 1 family. Argininosuccinate lyase subfamily.

The protein resides in the cytoplasm. The catalysed reaction is 2-(N(omega)-L-arginino)succinate = fumarate + L-arginine. It participates in amino-acid biosynthesis; L-arginine biosynthesis; L-arginine from L-ornithine and carbamoyl phosphate: step 3/3. This chain is Argininosuccinate lyase, found in Streptomyces coelicolor (strain ATCC BAA-471 / A3(2) / M145).